Here is a 497-residue protein sequence, read N- to C-terminus: Aluminum-activated malate transporter 10 (497 aa).

The next 6 membrane-spanning stretches (helical) occupy residues 66 to 86, 88 to 108, 123 to 143, 148 to 168, 173 to 193, and 210 to 230; these read KVVHCLKVGLALSLVSIFYYM, PLYDGVGGNAMWAIMTVVVVF, VVATILAGSLGIAVHWVATQS, VFVIGCSVFLFAFAATYSRFV, ARFDYGAMIFILTFSLVSVGG, and IAIGTSICIIITVFFCPIWAG. Disordered regions lie at residues 413–437 and 476–497; these read PIETNKPEEVPSEEENKVDSEERTT and DFEQDSKKKTGDNNTKQPPLSS. Positions 417-436 are enriched in basic and acidic residues; that stretch reads NKPEEVPSEEENKVDSEERT. Residues 487 to 497 show a composition bias toward polar residues; the sequence is DNNTKQPPLSS.

It belongs to the aromatic acid exporter (TC 2.A.85) family.

The protein localises to the membrane. Malate transporter. This Arabidopsis thaliana (Mouse-ear cress) protein is Aluminum-activated malate transporter 10 (ALMT10).